Reading from the N-terminus, the 548-residue chain is Hydroxylamine reductase (548 aa).

Cys-3, Cys-6, Cys-15, and Cys-21 together coordinate [4Fe-4S] cluster. Residues His-239, Glu-263, Cys-307, Cys-401, Cys-429, Cys-454, Glu-489, and Lys-491 each contribute to the hybrid [4Fe-2O-2S] cluster site. Cys-401 is modified (cysteine persulfide).

The protein belongs to the HCP family. It depends on [4Fe-4S] cluster as a cofactor. The cofactor is hybrid [4Fe-2O-2S] cluster.

It is found in the cytoplasm. It catalyses the reaction A + NH4(+) + H2O = hydroxylamine + AH2 + H(+). Catalyzes the reduction of hydroxylamine to form NH(3) and H(2)O. The sequence is that of Hydroxylamine reductase from Desulfosudis oleivorans (strain DSM 6200 / JCM 39069 / Hxd3) (Desulfococcus oleovorans).